The primary structure comprises 450 residues: tRNA modification GTPase MnmE (450 aa).

Positions 23, 80, and 123 each coordinate (6S)-5-formyl-5,6,7,8-tetrahydrofolate. The TrmE-type G domain maps to 219–372; that stretch reads GLHVVLAGKP…LRQRLLQLAG (154 aa). Residue Asn-229 coordinates K(+). GTP-binding positions include 229 to 234, 248 to 254, 273 to 276, and 353 to 355; these read NVGKSS, TPIAGTT, DTAG, and SAR. Residue Ser-233 participates in Mg(2+) binding. Positions 248, 250, and 253 each coordinate K(+). Thr-254 lines the Mg(2+) pocket. Lys-450 serves as a coordination point for (6S)-5-formyl-5,6,7,8-tetrahydrofolate.

The protein belongs to the TRAFAC class TrmE-Era-EngA-EngB-Septin-like GTPase superfamily. TrmE GTPase family. As to quaternary structure, homodimer. Heterotetramer of two MnmE and two MnmG subunits. Requires K(+) as cofactor.

The protein resides in the cytoplasm. Its function is as follows. Exhibits a very high intrinsic GTPase hydrolysis rate. Involved in the addition of a carboxymethylaminomethyl (cmnm) group at the wobble position (U34) of certain tRNAs, forming tRNA-cmnm(5)s(2)U34. The polypeptide is tRNA modification GTPase MnmE (Bordetella parapertussis (strain 12822 / ATCC BAA-587 / NCTC 13253)).